The following is a 689-amino-acid chain: Glycine--tRNA ligase beta subunit (689 aa).

It belongs to the class-II aminoacyl-tRNA synthetase family. In terms of assembly, tetramer of two alpha and two beta subunits.

It localises to the cytoplasm. The catalysed reaction is tRNA(Gly) + glycine + ATP = glycyl-tRNA(Gly) + AMP + diphosphate. The sequence is that of Glycine--tRNA ligase beta subunit from Escherichia coli O127:H6 (strain E2348/69 / EPEC).